The chain runs to 322 residues: MIFLPISSIETKTYIFQSIVILVCVLITASIMSVVERRVLGLLQNRYGPNRVGWQGTLQVVADMIKLFFKEDWIPTFSKKITFLIAPILAFISLLLVITIIPLSPSIVIVNLDIGVLFFLMMASLSVYSVLLAGWSSNNKYALLGSIRATAQTLSYEVFLGLSCMGVVARAKSFNMIDIVDSQIGLWNIIPQFFGFLAFFIAGLALCHRHPFDQPESEQELADGYHIEYSSIKFGLFFIGEYISIIVVSSLISTMFFGGWLGPLFPSYFWFILKTLCFMMIFILIRASLPRPRYDKMMLFGWKVCFPLTLINLIFTALIMLY.

Helical transmembrane passes span 15–35, 81–101, 114–134, 149–169, 184–204, 237–257, 265–285, and 299–319; these read IFQS…MSVV, ITFL…ITII, IGVL…LLAG, ATAQ…GVVA, IGLW…IAGL, FFIG…TMFF, FPSY…FILI, and LFGW…TALI.

Belongs to the complex I subunit 1 family. In terms of assembly, NDH-1 is composed of 13 different subunits. Subunits NuoA, H, J, K, L, M, N constitute the membrane sector of the complex.

The protein localises to the cell membrane. The enzyme catalyses a quinone + NADH + 5 H(+)(in) = a quinol + NAD(+) + 4 H(+)(out). Functionally, NDH-1 shuttles electrons from NADH, via FMN and iron-sulfur (Fe-S) centers, to quinones in the respiratory chain. The immediate electron acceptor for the enzyme in this species is believed to be ubiquinone. Couples the redox reaction to proton translocation (for every two electrons transferred, four hydrogen ions are translocated across the cytoplasmic membrane), and thus conserves the redox energy in a proton gradient. This subunit may bind ubiquinone. This is NADH-quinone oxidoreductase subunit H from Buchnera aphidicola subsp. Baizongia pistaciae (strain Bp).